Here is a 336-residue protein sequence, read N- to C-terminus: MSKYKILDSHIHLYSLANIPLLHWDEGNPLHGNRRLDEYIENSQSTQFDVEGVVWIECDAKIDLTQGLKGLENPIEEYLYICRNINGKLLPEEGVSTPFKRRLIKAMIPFAPMPLGSAGVEEYVKALKTRNSSEFHLVKGFRYLIQDKPPLTISDPHFVSSFQWLDSNGYVFDLGIDMRSGGLWQFKETLEVFKKVPNLKYIINHLTKPCLDFDPETIDSNPDFLSWKRLVTEMYITTPNSYMKLSGGFSEVEQDVALDVTSTSRHVYPWFKVVYELWGPERTIFASNWPVCAIPAGQNLTEKWFQVCETLFDSIGMDEDTRRKIYYSNAFKAYNI.

Belongs to the metallo-dependent hydrolases superfamily. Requires a divalent metal cation as cofactor.

It carries out the reaction L-rhamnono-1,4-lactone + H2O = L-rhamnonate + H(+). With respect to regulation, inhibited by Zn(2+), Fe(2+) and Cu(2+), but not by EDTA. Its function is as follows. Hydrolase with high substrate specificity for L-rhamnono-1,4-lactone. Catalyzes the second step in an alternative pathway for rhamnose utilization that does not involve phosphorylated intermediates. The sequence is that of L-rhamnono-gamma-lactonase (LRA2) from Scheffersomyces stipitis (strain ATCC 58785 / CBS 6054 / NBRC 10063 / NRRL Y-11545) (Yeast).